Here is a 439-residue protein sequence, read N- to C-terminus: GTPase Der (439 aa).

EngA-type G domains are found at residues 4–169 and 177–352; these read AMVA…PEND and IKIA…EEYN. GTP is bound by residues 10 to 17, 57 to 61, 120 to 123, 183 to 190, 230 to 234, and 295 to 298; these read GRPNVGKS, DTGGL, NKVD, DTAGI, and NKWD. The region spanning 353–437 is the KH-like domain; sequence KRITTGLLNN…PIVISTKKRG (85 aa).

Belongs to the TRAFAC class TrmE-Era-EngA-EngB-Septin-like GTPase superfamily. EngA (Der) GTPase family. Associates with the 50S ribosomal subunit.

GTPase that plays an essential role in the late steps of ribosome biogenesis. The chain is GTPase Der from Caldanaerobacter subterraneus subsp. tengcongensis (strain DSM 15242 / JCM 11007 / NBRC 100824 / MB4) (Thermoanaerobacter tengcongensis).